Here is a 312-residue protein sequence, read N- to C-terminus: Methionyl-tRNA formyltransferase (312 aa).

107 to 110 (SLLP) contacts (6S)-5,6,7,8-tetrahydrofolate.

It belongs to the Fmt family.

The enzyme catalyses L-methionyl-tRNA(fMet) + (6R)-10-formyltetrahydrofolate = N-formyl-L-methionyl-tRNA(fMet) + (6S)-5,6,7,8-tetrahydrofolate + H(+). Attaches a formyl group to the free amino group of methionyl-tRNA(fMet). The formyl group appears to play a dual role in the initiator identity of N-formylmethionyl-tRNA by promoting its recognition by IF2 and preventing the misappropriation of this tRNA by the elongation apparatus. The protein is Methionyl-tRNA formyltransferase of Borreliella burgdorferi (strain ZS7) (Borrelia burgdorferi).